The following is a 148-amino-acid chain: Single-stranded DNA-binding protein 2 (148 aa).

Positions Met-6–Leu-108 constitute an SSB domain.

Homotetramer.

In Tropheryma whipplei (strain TW08/27) (Whipple's bacillus), this protein is Single-stranded DNA-binding protein 2 (ssb2).